Here is a 142-residue protein sequence, read N- to C-terminus: NCT transcriptional regulatory complex subunit B (142 aa).

Belongs to the NC2 beta/DR1 family. Forms the NCT transcriptional regulatory complex with nctA and mot1.

It is found in the nucleus. Part of the NCT transcriptional regulatory complex that acts as a key regulator of ergosterol biosynthesis and the azole exporter cdr1B. The NCT complex binds the promoters of genes linked to azole susceptibility, and especially represses the expression of cdr1B transporter. This chain is NCT transcriptional regulatory complex subunit B, found in Aspergillus fumigatus (strain CBS 144.89 / FGSC A1163 / CEA10) (Neosartorya fumigata).